Reading from the N-terminus, the 309-residue chain is Cytochrome c biogenesis protein CcsA (309 aa).

8 helical membrane passes run 18 to 38 (LGLL…GAVF), 48 to 68 (LITI…WSIS), 73 to 93 (ISNL…GQLL), 102 to 122 (IIPS…CFVL), 148 to 168 (VMLS…VLFI), 216 to 236 (SILV…VWAN), 250 to 267 (TWAF…HMRI), and 279 to 299 (LAST…FLGI).

Belongs to the CcmF/CycK/Ccl1/NrfE/CcsA family. May interact with ccs1.

The protein localises to the cellular thylakoid membrane. Functionally, required during biogenesis of c-type cytochromes (cytochrome c6 and cytochrome f) at the step of heme attachment. The chain is Cytochrome c biogenesis protein CcsA from Prochlorococcus marinus (strain AS9601).